A 287-amino-acid polypeptide reads, in one-letter code: Pantothenate synthetase (287 aa).

Residue 30 to 37 (MGNLHDGH) participates in ATP binding. The active-site Proton donor is the histidine 37. (R)-pantoate is bound at residue glutamine 61. Residue glutamine 61 participates in beta-alanine binding. Position 148-151 (148-151 (GQKD)) interacts with ATP. Residue glutamine 154 participates in (R)-pantoate binding. Residues isoleucine 177 and 185-188 (LSSR) contribute to the ATP site.

It belongs to the pantothenate synthetase family. As to quaternary structure, homodimer.

The protein localises to the cytoplasm. It carries out the reaction (R)-pantoate + beta-alanine + ATP = (R)-pantothenate + AMP + diphosphate + H(+). It participates in cofactor biosynthesis; (R)-pantothenate biosynthesis; (R)-pantothenate from (R)-pantoate and beta-alanine: step 1/1. Functionally, catalyzes the condensation of pantoate with beta-alanine in an ATP-dependent reaction via a pantoyl-adenylate intermediate. This is Pantothenate synthetase from Psychrobacter cryohalolentis (strain ATCC BAA-1226 / DSM 17306 / VKM B-2378 / K5).